An 892-amino-acid chain; its full sequence is Alpha-actinin-1 (892 aa).

Position 1 is an N-acetylmethionine (Met1). The interval 1–247 (MDHYDSQQTN…IMTYVSSFYH (247 aa)) is actin-binding. Residue Ser6 is modified to Phosphoserine. The residue at position 12 (Tyr12) is a Phosphotyrosine; by FAK1. Calponin-homology (CH) domains follow at residues 31-135 (KQQR…LRFA) and 144-250 (TSAK…HAFS). 2 positions are modified to N6-acetyllysine: Lys95 and Lys195. 4 Spectrin repeats span residues 274–384 (QLME…WLLN), 394–499 (HLAE…ALER), 509–620 (QLYL…ALTE), and 630–733 (RLRK…EVEN). The segment at 274-733 (QLMEDYEKLA…IARTINEVEN (460 aa)) is interaction with DDN. Phosphoserine is present on Ser471. The residue at position 676 (Lys676) is an N6-acetyllysine. Ser677 bears the Phosphoserine mark. EF-hand domains follow at residues 746-781 (EQMNEFRASFNHFDRDHSGTLGPEEFKACLISLGYD) and 787-822 (QGEAEFARIMSIVDPNRLGVVTFQAFIDFMSRETAD). Positions 759, 761, 763, 765, and 770 each coordinate Ca(2+). The residue at position 890 (Ser890) is a Phosphoserine.

This sequence belongs to the alpha-actinin family. Homodimer; antiparallel. Interacts with MYOZ2, TTID and LPP. Interacts with DDN. Interacts with PSD. Interacts with MICALL2. Interacts with DNM2 and CTTN. Interacts with PDLIM1. Interacts with PDLIM2. Interacts with PDLIM4 (via PDZ domain). Interacts with IGSF8.

It is found in the cytoplasm. The protein localises to the cytoskeleton. Its subcellular location is the myofibril. It localises to the sarcomere. The protein resides in the z line. It is found in the cell membrane. The protein localises to the cell junction. Its subcellular location is the cell projection. It localises to the ruffle. In terms of biological role, F-actin cross-linking protein which is thought to anchor actin to a variety of intracellular structures. Association with IGSF8 regulates the immune synapse formation and is required for efficient T-cell activation. In Bos taurus (Bovine), this protein is Alpha-actinin-1 (ACTN1).